The chain runs to 868 residues: Probable mixed-linked glucan synthase 3 (868 aa).

The tract at residues 36–68 (ERKAAGGGGGGAKGKHWAAADKGERRAAKECGG) is disordered. Positions 53–68 (AAADKGERRAAKECGG) are enriched in basic and acidic residues. 2 consecutive transmembrane segments (helical) span residues 86-106 (LLHPYRALIFARLIAVLLFFG) and 116-136 (IMWFWTMSVAGDVWFGFSWLL). Residue Asp-211 is part of the active site. Positions 412 and 414 each coordinate substrate. The active site involves Asp-573. 6 helical membrane passes run 649-669 (IYPVTSLFILLYAISPVMWLI), 686-706 (LLVIILMIHMIGWLEIKWAGI), 717-737 (FFMIGSTSAYPTAVLHMVVNL), 771-791 (MLIPTMVVLVANIGAIGVAIG), 810-830 (MGLLFNMWVMFLLYPFALAIM), and 838-858 (IILVVLLPIIFVIVALVYVAT).

It belongs to the glycosyltransferase 2 family. Plant cellulose synthase-like F subfamily.

It is found in the golgi apparatus membrane. May catalyze both beta-1,3 and beta-1,4 glycosidic linkage on beta-D-glucan. Essential for (1,3;1,4)-beta-D-glucans synthesis in grasses and cereals (Poaceae). The mixed-linked glucans (which are not present in walls of dicotyledons or most other monocotyledonous plants) are particularly important constituents of the walls of the starchy endosperm and aleurone cells of cereal grains such as oats, wheat, rice and barley. They can account for up to 70% by weight of the wall. This chain is Probable mixed-linked glucan synthase 3 (CSLF3), found in Oryza sativa subsp. japonica (Rice).